The sequence spans 567 residues: Hexose transporter HXT11 (567 aa).

Residues 1–22 (MSGVNNTSANELSTTMSNSNSA) show a composition bias toward polar residues. Residues 1 to 45 (MSGVNNTSANELSTTMSNSNSAVGAPSVKTEHGDSKNSLNLDANE) form a disordered region. Over 1–56 (MSGVNNTSANELSTTMSNSNSAVGAPSVKTEHGDSKNSLNLDANEPPIDLPQKPLS) the chain is Cytoplasmic. A helical transmembrane segment spans residues 57 to 77 (AYTTVAILCLMIAFGGFIFGW). Residues 78 to 112 (DTGTISGFVNLSDFIRRFGQKNDKGTYYLSKVRMG) lie on the Extracellular side of the membrane. An N-linked (GlcNAc...) asparagine glycan is attached at Asn87. Residues 113-133 (LIVSIFNIGCAIGGIVLSKVG) traverse the membrane as a helical segment. Residues 134-139 (DIYGRR) are Cytoplasmic-facing. The helical transmembrane segment at 140–160 (IGLITVTAIYVVGILIQITSI) threads the bilayer. Topologically, residues 161–170 (NKWYQYFIGR) are extracellular. The helical transmembrane segment at 171-191 (IISGLGVGGIAVLSPMLISEV) threads the bilayer. Topologically, residues 192–197 (APKHIR) are cytoplasmic. A helical membrane pass occupies residues 198–218 (GTLVQLYQLMGTMGIFLGYCT). Over 219 to 232 (NYGTKNYHNATQWR) the chain is Extracellular. Asn227 carries N-linked (GlcNAc...) asparagine glycosylation. The chain crosses the membrane as a helical span at residues 233–253 (VGLGLCFAWATFMVSGMMFVP). Residues 254–336 (ESPRYLIEVG…IQSLQQLTGD (83 aa)) are Cytoplasmic-facing. Residues 337-353 (NYFFYYGTTIFKSVGLK) form a helical membrane-spanning segment. Residues 354 to 359 (DSFQTS) are Extracellular-facing. Residues 360–377 (IIIGVVNFFSSFIAVYTI) form a helical membrane-spanning segment. Residues 378 to 384 (ERFGRRT) are Cytoplasmic-facing. A helical membrane pass occupies residues 385 to 405 (CLLWGAASMLCCFAVFASVGV). At 406-429 (TKLWPQGSSHQDITSQGAGNCMIV) the chain is on the extracellular side. A helical transmembrane segment spans residues 430–450 (FTMFFIFSFATTWAGGCYVIV). Topologically, residues 451–467 (SETFPLRVKSRGMAIAT) are cytoplasmic. Residues 468–488 (AANWMWGFLISFFTPFITGAI) form a helical membrane-spanning segment. Position 489 (Asn489) is a topological domain, extracellular. Residues 490 to 510 (FYYGYVFLGCLVFAYFYVFFF) form a helical membrane-spanning segment. At 511-567 (VPETKGLTLEEVNTMWLEGVPAWKSASWVPPERRTADYDADAIDHDNRPIYKRFFSS) the chain is on the cytoplasmic side.

The protein belongs to the major facilitator superfamily. Sugar transporter (TC 2.A.1.1) family.

It localises to the membrane. Its function is as follows. Probable glucose transporter. The protein is Hexose transporter HXT11 (HXT11) of Saccharomyces cerevisiae (strain ATCC 204508 / S288c) (Baker's yeast).